Here is a 137-residue protein sequence, read N- to C-terminus: MIIIALDFGTKNIGVAVGQNYTNTARSLPSIKVKNKKLNIEKLNKLIDEWKPNAIVVGHPLNIDGTKQKITQCSENFSKKLKNIFKIPILLHDERLSTVEAKAILFEKYGYKSLKKERIDSMSAVIILESWFLYSKN.

Belongs to the YqgF nuclease family.

It is found in the cytoplasm. Functionally, could be a nuclease involved in processing of the 5'-end of pre-16S rRNA. The sequence is that of Putative pre-16S rRNA nuclease from Buchnera aphidicola subsp. Baizongia pistaciae (strain Bp).